The chain runs to 1493 residues: Protein RNA-directed DNA methylation 3 (1493 aa).

Disordered stretches follow at residues 1–34 (MDRK…EGLR) and 54–96 (GYYG…SSFV). The Nuclear localization signal motif lies at 21 to 28 (KRKNSVEF). Basic and acidic residues predominate over residues 24-34 (NSVEFRDEGLR). Acidic residues predominate over residues 60-80 (SDEDDDGLGFLNDMEDEPEVE). A compositionally biased stretch (basic and acidic residues) spans 81 to 92 (ESSKAGKGEKGK). One can recognise a KOW 1 domain in the interval 239 to 266 (KVSEGTWARVKNGKYKGDLAQIVAVSDT). The interval 393–432 (PTCREGGKGEGSGGGKGEGSGGGKGEGSRGGKGEGSSDFK) is disordered. Gly residues predominate over residues 401-417 (GEGSGGGKGEGSGGGKG). The segment covering 418–432 (EGSRGGKGEGSSDFK) has biased composition (basic and acidic residues). Positions 501 to 528 (QISVNDVVKISKGPSEGKQGVVRQVYRG) constitute a KOW 2 domain. The tract at residues 578-602 (SSPKSPLSPEKEWQPRERYNSSNQG) is disordered. A compositionally biased stretch (basic and acidic residues) spans 586–596 (PEKEWQPRERY). One can recognise a KOW 3 domain in the interval 607–634 (TYSIGQKLRIRVGPLKGYLCRVIALRYS). Disordered stretches follow at residues 692-711 (IGAG…PSTD), 728-747 (EKNP…TVAD), and 757-1493 (AAEN…KTGW). Copy 1 of the repeat occupies 732-741 (WGGSKPTSDV). The tract at residues 732–1493 (WGGSKPTSDV…WGTGDKKTGW (762 aa)) is 42 X 9 AA approximate WG/GW-rich tandem repeats. The span at 757–767 (AAENKPASASD) shows a compositional bias: low complexity. 37 repeat units span residues 775–784 (WGKTPASEAG), 789–797 (WGDTSASNV), 818–827 (WGTHGGSSGG), 836–845 (WGKLCEASES), 854–863 (WGKKGGSDGE), 866–875 (WGNKDGNSSA), 883–892 (WGQQDKGSDE), 917–926 (GWNKSAEDSN), 935–943 (WGQPNDGSS), 944–953 (WGKKGDGAAS), 954–962 (WGKKDDGGS), 963–972 (WGKKDDGNKD), 978–987 (WGKKDDGQKD), 1003–1012 (WGKKDDGGSS), 1013–1022 (WGKKDDGGSL), 1023–1032 (WGKKDDGGSS), 1033–1042 (WGKEDDGGSL), 1043–1052 (WGKKDDGESS), 1053–1062 (WGKKDDGESS), 1063–1072 (WGKKDDGGSS), 1073–1082 (WGKKDEGGYS), 1132–1141 (WGKQDGDGGG), 1144–1153 (WGKENDAGGG), 1156–1165 (WGKQDNGVGS), 1167–1176 (WGKQNDGSGG), 1180–1189 (WGKQNDAGGG), 1192–1201 (WGKQDSGGDG), 1204–1213 (WGKQDGGGDS), 1217–1226 (WGKQNNTSGG), 1229–1238 (WGKQSDAGGG), 1241–1250 (WGKQDGGGGG), 1253–1262 (WGKQDGGGGS), 1266–1275 (WGKQNETSNG), 1278–1287 (WGKQNDSGGG), 1290–1299 (WGKQDGGGGG), 1302–1311 (WGKQNDGGGG), and 1314–1323 (WGKQGDGGSK). Positions 790 to 812 (GDTSASNVEASSWEKQGASTSNV) are enriched in polar residues. Over residues 846–860 (SQKKEESSWGKKGGS) the composition is skewed to basic and acidic residues. The segment covering 866-875 (WGNKDGNSSA) has biased composition (polar residues). The segment covering 955-1090 (GKKDDGGSWG…YSEQTFDRGG (136 aa)) has biased composition (basic and acidic residues). Residues 1122–1134 (PWSKPSGGSSWGK) are compositionally biased toward low complexity. Over residues 1156–1172 (WGKQDNGVGSSWGKQND) the composition is skewed to polar residues. Residues 1186 to 1213 (AGGGSSWGKQDSGGDGSSWGKQDGGGDS) are compositionally biased toward gly residues. A compositionally biased stretch (polar residues) spans 1218–1231 (GKQNNTSGGSSWGK). Positions 1235-1264 (AGGGSSWGKQDGGGGGSSWGKQDGGGGSGS) are enriched in gly residues. The span at 1270–1283 (NETSNGSSWGKQND) shows a compositional bias: polar residues. The segment covering 1284 to 1321 (SGGGSSWGKQDGGGGGSSWGKQNDGGGGSSWGKQGDGG) has biased composition (gly residues). Polar residues-rich tracts occupy residues 1366–1382 (WKTD…QSGG) and 1392–1401 (DSNNSKPSGS). Repeat unit 39 spans residues 1389–1398 (WGEDSNNSKP). The segment covering 1416 to 1430 (NSKKETNDKPGDDSK) has biased composition (basic and acidic residues). The segment covering 1432–1442 (AWGTSNDQVNT) has biased composition (polar residues). Repeat copies occupy residues 1433–1442 (WGTSNDQVNT), 1467–1475 (WGGKTNAVA), and 1484–1493 (WGTGDKKTGW).

Interacts with AGO4 via its C-terminal region and with RNA transcripts. Binds chromatin at loci subject to transcriptional silencing downstream of RNA Polymerase V, but independently from the presence of 24-nt siRNA.

The protein resides in the nucleus. Its subcellular location is the nucleoplasm. Effector of RNA-directed DNA methylation (RdDM) triggered by small interfering RNAs (siRNAs, 24-nt RNAs). Functions as an adapter protein that binds scaffold transcripts generated by polymerase V and recruits AGO4 and AGO4-bound siRNAs to form an RdDM effector complex. Promotes the expression of 24-nt RNAs. Required for the initial establishment of DNA methylation. Together with AGO4, required for transcriptional gene silencing (TGS) by DNA methylation and repressive histone modifications (H3K9me2) of several chromatin loci. The chain is Protein RNA-directed DNA methylation 3 from Arabidopsis thaliana (Mouse-ear cress).